Reading from the N-terminus, the 178-residue chain is ATP synthase subunit delta (178 aa).

It belongs to the ATPase delta chain family. As to quaternary structure, F-type ATPases have 2 components, F(1) - the catalytic core - and F(0) - the membrane proton channel. F(1) has five subunits: alpha(3), beta(3), gamma(1), delta(1), epsilon(1). F(0) has three main subunits: a(1), b(2) and c(10-14). The alpha and beta chains form an alternating ring which encloses part of the gamma chain. F(1) is attached to F(0) by a central stalk formed by the gamma and epsilon chains, while a peripheral stalk is formed by the delta and b chains.

The protein resides in the cell membrane. Functionally, f(1)F(0) ATP synthase produces ATP from ADP in the presence of a proton or sodium gradient. F-type ATPases consist of two structural domains, F(1) containing the extramembraneous catalytic core and F(0) containing the membrane proton channel, linked together by a central stalk and a peripheral stalk. During catalysis, ATP synthesis in the catalytic domain of F(1) is coupled via a rotary mechanism of the central stalk subunits to proton translocation. This protein is part of the stalk that links CF(0) to CF(1). It either transmits conformational changes from CF(0) to CF(1) or is implicated in proton conduction. This chain is ATP synthase subunit delta, found in Streptococcus pyogenes serotype M3 (strain SSI-1).